The primary structure comprises 288 residues: Glucose uptake protein GlcU (288 aa).

Helical transmembrane passes span 4–26 (LIALLPALFWGSVVLINVLVGGG), 33–51 (GTTFGALIIGIILLLTGNA), 56–75 (LTIIIVGLISGAFWALGQGY), 82–104 (LIGVSKTMPISTGLQLVGTTLFS), 114–136 (GVQVTLGLVAMVLLVIGIALTSI), 148–170 (NFGKAMPILLISTVGYVVYVVVA), 180–197 (ALFFQSIGMAIGGLILSA), 206–225 (TLWNLIPGIVWGIGNLFMFY), 230–252 (VGVATSFSFSQLLVIVSTLGGIF), and 264–283 (IGIWAGIVLIVIAPLYSEIL).

This sequence belongs to the GRP transporter (TC 2.A.7.5) family.

The protein localises to the cell membrane. Functionally, involved in the uptake of glucose. The polypeptide is Glucose uptake protein GlcU (glcU) (Staphylococcus xylosus).